We begin with the raw amino-acid sequence, 280 residues long: Shikimate dehydrogenase (NADP(+)) (280 aa).

Shikimate contacts are provided by residues 23–25 and T70; that span reads SLS. K74 (proton acceptor) is an active-site residue. Shikimate is bound by residues N95 and D111. NADP(+) is bound by residues 135–139, 158–163, and I221; these read GSGGA and NRTISK. Position 223 (Y223) interacts with shikimate. An NADP(+)-binding site is contributed by G247.

The protein belongs to the shikimate dehydrogenase family. In terms of assembly, homodimer.

It catalyses the reaction shikimate + NADP(+) = 3-dehydroshikimate + NADPH + H(+). The protein operates within metabolic intermediate biosynthesis; chorismate biosynthesis; chorismate from D-erythrose 4-phosphate and phosphoenolpyruvate: step 4/7. Its function is as follows. Involved in the biosynthesis of the chorismate, which leads to the biosynthesis of aromatic amino acids. Catalyzes the reversible NADPH linked reduction of 3-dehydroshikimate (DHSA) to yield shikimate (SA). In Buchnera aphidicola subsp. Cinara cedri (strain Cc), this protein is Shikimate dehydrogenase (NADP(+)).